The chain runs to 237 residues: Ribonuclease 3 (237 aa).

The RNase III domain maps to 4–133; the sequence is LTELEKSLGV…VLAAIYLDKG (130 aa). E46 is a Mg(2+) binding site. Active-site residues include D50 and E122. E122 is a Mg(2+) binding site. The 70-residue stretch at 160-229 folds into the DRBM domain; that stretch reads DYKSRLQELV…AKEALQQFEN (70 aa).

This sequence belongs to the ribonuclease III family. In terms of assembly, homodimer. Mg(2+) serves as cofactor.

It localises to the cytoplasm. The catalysed reaction is Endonucleolytic cleavage to 5'-phosphomonoester.. In terms of biological role, digests double-stranded RNA. Involved in the processing of primary rRNA transcript to yield the immediate precursors to the large and small rRNAs (23S and 16S). Processes some mRNAs, and tRNAs when they are encoded in the rRNA operon. Processes pre-crRNA and tracrRNA of type II CRISPR loci if present in the organism. This is Ribonuclease 3 from Dehalococcoides mccartyi (strain ATCC BAA-2266 / KCTC 15142 / 195) (Dehalococcoides ethenogenes (strain 195)).